The following is a 281-amino-acid chain: sn-glycerol-3-phosphate transport system permease protein UgpE (281 aa).

Transmembrane regions (helical) follow at residues 16-36 (LILGIAVILFPLYVAFVAATL), 85-105 (FSITLGKITVSMLSAFAIVWF), 113-133 (FFWMIFITLMLPVEVRIFPTV), 142-162 (LDSYAGLTLPLMASAIATFLF), 202-222 (ALFVITFIYGWNQYLWPLLII), and 247-267 (WNSVMAAMLLTLIPPVVIVLV). In terms of domain architecture, ABC transmembrane type-1 spans 77–268 (LLNSFVMAFS…IPPVVIVLVM (192 aa)).

It belongs to the binding-protein-dependent transport system permease family. UgpAE subfamily. As to quaternary structure, the complex is composed of two ATP-binding proteins (UgpC), two transmembrane proteins (UgpA and UgpE) and a solute-binding protein (UgpB).

Its subcellular location is the cell inner membrane. In terms of biological role, part of the ABC transporter complex UgpBAEC involved in sn-glycerol-3-phosphate (G3P) import. Probably responsible for the translocation of the substrate across the membrane. The protein is sn-glycerol-3-phosphate transport system permease protein UgpE (ugpE) of Shigella flexneri serotype 5b (strain 8401).